Consider the following 117-residue polypeptide: Peptidyl-tRNA hydrolase (117 aa).

It belongs to the PTH2 family.

Its subcellular location is the cytoplasm. The catalysed reaction is an N-acyl-L-alpha-aminoacyl-tRNA + H2O = an N-acyl-L-amino acid + a tRNA + H(+). In terms of biological role, the natural substrate for this enzyme may be peptidyl-tRNAs which drop off the ribosome during protein synthesis. This Thermoplasma acidophilum (strain ATCC 25905 / DSM 1728 / JCM 9062 / NBRC 15155 / AMRC-C165) protein is Peptidyl-tRNA hydrolase.